A 171-amino-acid chain; its full sequence is Protein phosphatase 1 regulatory subunit 1A (171 aa).

Position 1 is an N-acetylmethionine (Met-1). Residues Lys-9–Phe-12 form an essential for activity region. The tract at residues Leu-17 to Val-171 is disordered. Over residues Pro-19–Ile-29 the composition is skewed to basic and acidic residues. Residue Thr-35 is modified to Phosphothreonine; by PKA. Positions Thr-42 to Arg-54 are essential for activity. Phosphoserine occurs at positions 43, 46, 47, and 67. Residues Gly-122–Ala-133 are compositionally biased toward polar residues. The span at Ala-137 to Gly-148 shows a compositional bias: basic and acidic residues. The segment at Thr-143–Val-171 is interaction with PPP1R15A.

This sequence belongs to the protein phosphatase inhibitor 1 family. As to quaternary structure, interacts with PPP1R15A. Post-translationally, phosphorylation of Thr-35 is required for activity.

Its function is as follows. Inhibitor of protein-phosphatase 1. This protein may be important in hormonal control of glycogen metabolism. Hormones that elevate intracellular cAMP increase I-1 activity in many tissues. I-1 activation may impose cAMP control over proteins that are not directly phosphorylated by PKA. Following a rise in intracellular calcium, I-1 is inactivated by calcineurin (or PP2B). Does not inhibit type-2 phosphatases. The polypeptide is Protein phosphatase 1 regulatory subunit 1A (Ppp1r1a) (Rattus norvegicus (Rat)).